A 633-amino-acid polypeptide reads, in one-letter code: DNA repair protein XRCC1 (633 aa).

S144 is modified (phosphoserine). The segment at 151–172 (VRFHSPPDKDEAETPSQKGTVT) is disordered. K180 is covalently cross-linked (Glycyl lysine isopeptide (Lys-Gly) (interchain with G-Cter in SUMO1); alternate). A Glycyl lysine isopeptide (Lys-Gly) (interchain with G-Cter in SUMO2); alternate cross-link involves residue K180. A Phosphothreonine modification is found at T202. Phosphoserine occurs at positions 203, 230, 245, and 263. The segment at 234 to 316 (KALGSSCKPQ…PRGARAGPQE (83 aa)) is disordered. Over residues 244 to 261 (ESPKGKRKLDLNLEDRRP) the composition is skewed to basic and acidic residues. Positions 280 to 298 (PSRSPAAAAASTPAQKAAP) are enriched in low complexity. Residues 300–309 (KPREGTEPRG) show a composition bias toward basic and acidic residues. Residues 316–404 (ELGKILQGVV…RRLPSRRYLM (89 aa)) enclose the BRCT 1 domain. S372, S409, S410, S411, S447, and S448 each carry phosphoserine. Residues 407–538 (LGSSSEDEED…STEADLPIPE (132 aa)) form a disordered region. Residues 411 to 425 (SEDEEDDSPGESGED) show a composition bias toward acidic residues. Residues T454 and T458 each carry the phosphothreonine modification. 2 positions are modified to phosphoserine: S462 and S486. Positions 467–491 (DNSDTEGEQSEGQDNGAEDSGDTED) are enriched in acidic residues. T489 is subject to Phosphothreonine. Residues 492-503 (ELRRVAEQREQR) are compositionally biased toward basic and acidic residues. A Phosphoserine modification is found at S519. Phosphothreonine is present on residues T520 and T524. In terms of domain architecture, BRCT 2 spans 538 to 629 (ELPDFFQGKH…KLLPHQLYGV (92 aa)).

As to quaternary structure, homodimer. Interacts with polynucleotide kinase (PNK), DNA polymerase-beta (POLB) and DNA ligase III (LIG3). Interacts with APTX and APLF. Interacts with APEX1; the interaction is induced by SIRT1 and increases with the acetylated form of APEX1. Interacts with (poly-ADP-ribosylated) PARP1. Post-translationally, phosphorylation of Ser-372 causes dimer dissociation. Phosphorylation by CK2 promotes interaction with APTX and APLF. In terms of processing, sumoylated.

It is found in the nucleus. The protein resides in the chromosome. In terms of biological role, scaffold protein involved in DNA single-strand break repair by mediating the assembly of DNA break repair protein complexes. Negatively regulates ADP-ribosyltransferase activity of PARP1 during base-excision repair in order to prevent excessive PARP1 activity. Recognizes and binds poly-ADP-ribose chains: specifically binds auto-poly-ADP-ribosylated PARP1, limiting its activity. The sequence is that of DNA repair protein XRCC1 (XRCC1) from Cricetulus griseus (Chinese hamster).